The following is a 160-amino-acid chain: Serine-protein kinase RsbW (160 aa).

The protein belongs to the anti-sigma-factor family.

It carries out the reaction L-seryl-[protein] + ATP = O-phospho-L-seryl-[protein] + ADP + H(+). The enzyme catalyses L-threonyl-[protein] + ATP = O-phospho-L-threonyl-[protein] + ADP + H(+). Functionally, negative regulator of sigma-B activity. Phosphorylates and inactivates its specific antagonist protein, RsbV. Upon phosphorylation of RsbV, RsbW is released and binds to sigma-B, thereby blocking its ability to form an RNA polymerase holoenzyme (E-sigma-B). The polypeptide is Serine-protein kinase RsbW (Bacillus cereus (strain ZK / E33L)).